A 335-amino-acid chain; its full sequence is Peflin (335 aa).

The span at 23 to 37 (AMEETRREFEKEKQR) shows a compositional bias: basic and acidic residues. The disordered stretch occupies residues 23-92 (AMEETRREFE…SPRHTKTPVD (70 aa)). The span at 43–53 (VTQAQTPNTRV) shows a compositional bias: polar residues. 5 EF-hand domains span residues 144–192 (KVAP…DDNS), 198–223 (SVDALINLFGASRFGTVNQAEFIALY), 224–259 (KRVKSWRKVYVDNDINGSLTISVSEFHNSLQELGYL), 260–300 (IPFE…LMRL), and 301–332 (TKLFRKFDTNQEGIATIQYKDFIDATLYLGRF). The Ca(2+) site is built by D170, R176, and E181. Ca(2+)-binding residues include D237, N239, S241, T243, and E248.

In terms of assembly, homodimer.

The protein localises to the cytoplasm. It localises to the nucleus. It is found in the bud tip. The protein resides in the bud neck. Functionally, calcium-binding protein that is required for polar bud growth and cell wall abscission. Can also bind zinc ions. The chain is Peflin (PEF1) from Saccharomyces cerevisiae (strain ATCC 204508 / S288c) (Baker's yeast).